The chain runs to 136 residues: Ribulose bisphosphate carboxylase small subunit, chloroplastic 1 (136 aa).

Residues 1 to 13 (NTDITSNGERVKC) constitute a chloroplast transit peptide.

Belongs to the RuBisCO small chain family. In terms of assembly, heterohexadecamer of 8 large and 8 small subunits.

The protein resides in the plastid. The protein localises to the chloroplast. In terms of biological role, ruBisCO catalyzes two reactions: the carboxylation of D-ribulose 1,5-bisphosphate, the primary event in carbon dioxide fixation, as well as the oxidative fragmentation of the pentose substrate. Both reactions occur simultaneously and in competition at the same active site. Although the small subunit is not catalytic it is essential for maximal activity. This is Ribulose bisphosphate carboxylase small subunit, chloroplastic 1 from Pisum sativum (Garden pea).